A 517-amino-acid polypeptide reads, in one-letter code: Crotonobetaine/carnitine--CoA ligase (517 aa).

This sequence belongs to the ATP-dependent AMP-binding enzyme family.

The catalysed reaction is 4-(trimethylamino)butanoate + ATP + CoA = 4-(trimethylamino)butanoyl-CoA + AMP + diphosphate. The enzyme catalyses crotonobetaine + ATP + CoA = crotonobetainyl-CoA + AMP + diphosphate. It carries out the reaction (R)-carnitine + ATP + CoA = (R)-carnitinyl-CoA + AMP + diphosphate. It functions in the pathway amine and polyamine metabolism; carnitine metabolism. Its function is as follows. Catalyzes the transfer of CoA to carnitine, generating the initial carnitinyl-CoA needed for the CaiB reaction cycle. Also has activity toward crotonobetaine and gamma-butyrobetaine. This Escherichia coli O7:K1 (strain IAI39 / ExPEC) protein is Crotonobetaine/carnitine--CoA ligase.